Here is a 443-residue protein sequence, read N- to C-terminus: Probable glycine dehydrogenase (decarboxylating) subunit 1 (443 aa).

Belongs to the GcvP family. N-terminal subunit subfamily. In terms of assembly, the glycine cleavage system is composed of four proteins: P, T, L and H. In this organism, the P 'protein' is a heterodimer of two subunits.

The catalysed reaction is N(6)-[(R)-lipoyl]-L-lysyl-[glycine-cleavage complex H protein] + glycine + H(+) = N(6)-[(R)-S(8)-aminomethyldihydrolipoyl]-L-lysyl-[glycine-cleavage complex H protein] + CO2. The glycine cleavage system catalyzes the degradation of glycine. The P protein binds the alpha-amino group of glycine through its pyridoxal phosphate cofactor; CO(2) is released and the remaining methylamine moiety is then transferred to the lipoamide cofactor of the H protein. This Koribacter versatilis (strain Ellin345) protein is Probable glycine dehydrogenase (decarboxylating) subunit 1.